Reading from the N-terminus, the 963-residue chain is Protein NLP2 (963 aa).

An RWP-RK domain is found at 635-716; sequence RRPGEKRRTK…IDSVQGVQGS (82 aa). Over residues 734–755 the composition is skewed to polar residues; the sequence is MSGTGTSFKNPNAQTENGVSAQ. The tract at residues 734–794 is disordered; sequence MSGTGTSFKN…QSTNTGTTSN (61 aa). Over residues 756–794 the composition is skewed to low complexity; that stretch reads GTAAAPKSPPSSSCSHSSGSSTCCSTGANQSTNTGTTSN. Positions 862 to 945 constitute a PB1 domain; it reads ASKVKATFGE…RTIKISVHEA (84 aa).

It localises to the nucleus. In terms of biological role, probable transcription factor. The sequence is that of Protein NLP2 (NLP2) from Arabidopsis thaliana (Mouse-ear cress).